The chain runs to 273 residues: Large ribosomal subunit protein uL2 (273 aa).

2 disordered regions span residues 28 to 53 (KPFA…TTRH) and 221 to 273 (RGTA…RRTK). Residues 39-48 (KSGGRNNNGR) show a composition bias toward low complexity.

It belongs to the universal ribosomal protein uL2 family. As to quaternary structure, part of the 50S ribosomal subunit. Forms a bridge to the 30S subunit in the 70S ribosome.

In terms of biological role, one of the primary rRNA binding proteins. Required for association of the 30S and 50S subunits to form the 70S ribosome, for tRNA binding and peptide bond formation. It has been suggested to have peptidyltransferase activity; this is somewhat controversial. Makes several contacts with the 16S rRNA in the 70S ribosome. The protein is Large ribosomal subunit protein uL2 of Pectobacterium atrosepticum (strain SCRI 1043 / ATCC BAA-672) (Erwinia carotovora subsp. atroseptica).